The sequence spans 247 residues: Carboxy-S-adenosyl-L-methionine synthase (247 aa).

S-adenosyl-L-methionine is bound by residues Y39, 64–66, 89–90, 117–118, N132, and R199; these read GCS, DN, and DI.

The protein belongs to the class I-like SAM-binding methyltransferase superfamily. Cx-SAM synthase family. As to quaternary structure, homodimer.

The catalysed reaction is prephenate + S-adenosyl-L-methionine = carboxy-S-adenosyl-L-methionine + 3-phenylpyruvate + H2O. Catalyzes the conversion of S-adenosyl-L-methionine (SAM) to carboxy-S-adenosyl-L-methionine (Cx-SAM). The sequence is that of Carboxy-S-adenosyl-L-methionine synthase from Klebsiella pneumoniae subsp. pneumoniae (strain ATCC 700721 / MGH 78578).